We begin with the raw amino-acid sequence, 349 residues long: FK506-binding protein-like (349 aa).

Thr-3 carries the phosphothreonine modification. Residues 36–55 (RQQPRDPPTETLELEVSPDP) are disordered. 3 TPR repeats span residues 210-243 (AREE…LLTL), 252-285 (TVLH…EPGH), and 286-319 (LKAL…DPKN).

Forms a ternary complex with CDKN1A/p21 and HSP90AB1/Hsp90. In terms of tissue distribution, ubiquitously expressed with higher levels in testis.

In terms of biological role, may be involved in response to X-ray. Regulates p21 protein stability by binding to Hsp90 and p21. The sequence is that of FK506-binding protein-like (FKBPL) from Homo sapiens (Human).